A 499-amino-acid chain; its full sequence is Probable UTP--glucose-1-phosphate uridylyltransferase (499 aa).

UTP contacts are provided by residues 108 to 111 (LNGG), Lys-122, Gln-185, and Gly-214. Residue 110–111 (GG) participates in substrate binding. Substrate is bound by residues His-215 and 243-245 (NID). Residues Asp-245 and Lys-387 each coordinate UTP.

It belongs to the UDPGP type 1 family.

The protein localises to the cytoplasm. Its subcellular location is the nucleus. It carries out the reaction alpha-D-glucose 1-phosphate + UTP + H(+) = UDP-alpha-D-glucose + diphosphate. Its function is as follows. Plays a central role as a glucosyl donor in cellular metabolic pathways. This chain is Probable UTP--glucose-1-phosphate uridylyltransferase, found in Schizosaccharomyces pombe (strain 972 / ATCC 24843) (Fission yeast).